We begin with the raw amino-acid sequence, 351 residues long: Glycerol-3-phosphate dehydrogenase [NAD(P)+] (351 aa).

NADPH is bound by residues Ser18, Trp19, Arg38, and Lys122. Sn-glycerol 3-phosphate-binding residues include Lys122, Gly153, and Ser155. Residue Ala157 participates in NADPH binding. Sn-glycerol 3-phosphate-binding residues include Lys208, Asp261, Ser271, Arg272, and Asn273. Residue Lys208 is the Proton acceptor of the active site. Arg272 is a binding site for NADPH. Glu297 is a binding site for NADPH.

This sequence belongs to the NAD-dependent glycerol-3-phosphate dehydrogenase family.

It is found in the cytoplasm. The catalysed reaction is sn-glycerol 3-phosphate + NAD(+) = dihydroxyacetone phosphate + NADH + H(+). It carries out the reaction sn-glycerol 3-phosphate + NADP(+) = dihydroxyacetone phosphate + NADPH + H(+). It functions in the pathway membrane lipid metabolism; glycerophospholipid metabolism. Catalyzes the reduction of the glycolytic intermediate dihydroxyacetone phosphate (DHAP) to sn-glycerol 3-phosphate (G3P), the key precursor for phospholipid synthesis. The sequence is that of Glycerol-3-phosphate dehydrogenase [NAD(P)+] from Bordetella parapertussis (strain 12822 / ATCC BAA-587 / NCTC 13253).